The chain runs to 277 residues: Large ribosomal subunit protein uL2 (277 aa).

The disordered stretch occupies residues Met-225–Gly-277.

It belongs to the universal ribosomal protein uL2 family. Part of the 50S ribosomal subunit. Forms a bridge to the 30S subunit in the 70S ribosome.

In terms of biological role, one of the primary rRNA binding proteins. Required for association of the 30S and 50S subunits to form the 70S ribosome, for tRNA binding and peptide bond formation. It has been suggested to have peptidyltransferase activity; this is somewhat controversial. Makes several contacts with the 16S rRNA in the 70S ribosome. The sequence is that of Large ribosomal subunit protein uL2 from Nitrosospira multiformis (strain ATCC 25196 / NCIMB 11849 / C 71).